The primary structure comprises 492 residues: ATP synthase subunit beta, chloroplastic (492 aa).

170–177 (GGAGVGKT) contacts ATP.

Belongs to the ATPase alpha/beta chains family. As to quaternary structure, F-type ATPases have 2 components, CF(1) - the catalytic core - and CF(0) - the membrane proton channel. CF(1) has five subunits: alpha(3), beta(3), gamma(1), delta(1), epsilon(1). CF(0) has four main subunits: a(1), b(1), b'(1) and c(9-12).

Its subcellular location is the plastid. It is found in the chloroplast thylakoid membrane. The catalysed reaction is ATP + H2O + 4 H(+)(in) = ADP + phosphate + 5 H(+)(out). In terms of biological role, produces ATP from ADP in the presence of a proton gradient across the membrane. The catalytic sites are hosted primarily by the beta subunits. The sequence is that of ATP synthase subunit beta, chloroplastic from Angiopteris lygodiifolia (Turnip fern).